The sequence spans 392 residues: uncharacterized protein (392 aa).

This is an uncharacterized protein from Encephalitozoon cuniculi (strain GB-M1) (Microsporidian parasite).